The following is a 117-amino-acid chain: Large ribosomal subunit protein uL24 (117 aa).

Over residues 1-10 the composition is skewed to basic residues; it reads MSKQPRKQRK. Positions 1–28 are disordered; that stretch reads MSKQPRKQRKALYNAPAHARGKHMSATL.

This sequence belongs to the universal ribosomal protein uL24 family. Part of the 50S ribosomal subunit.

Its function is as follows. One of two assembly initiator proteins, it binds directly to the 5'-end of the 23S rRNA, where it nucleates assembly of the 50S subunit. Functionally, located at the polypeptide exit tunnel on the outside of the subunit. This is Large ribosomal subunit protein uL24 from Methanobrevibacter smithii (strain ATCC 35061 / DSM 861 / OCM 144 / PS).